A 407-amino-acid polypeptide reads, in one-letter code: Argininosuccinate synthase (407 aa).

ATP contacts are provided by residues 16–24 and Ala44; that span reads AYSGGLDTS. Residues Tyr96 and Ser101 each contribute to the L-citrulline site. Gly126 provides a ligand contact to ATP. 3 residues coordinate L-aspartate: Thr128, Asn132, and Asp133. Residue Asn132 coordinates L-citrulline. L-citrulline contacts are provided by Arg136, Ser185, Ser194, Glu270, and Tyr282.

It belongs to the argininosuccinate synthase family. Type 1 subfamily. Homotetramer.

The protein localises to the cytoplasm. It carries out the reaction L-citrulline + L-aspartate + ATP = 2-(N(omega)-L-arginino)succinate + AMP + diphosphate + H(+). It participates in amino-acid biosynthesis; L-arginine biosynthesis; L-arginine from L-ornithine and carbamoyl phosphate: step 2/3. The polypeptide is Argininosuccinate synthase (Shewanella amazonensis (strain ATCC BAA-1098 / SB2B)).